The primary structure comprises 1983 residues: Nonribosomal peptide synthetase verP (1983 aa).

Residues 11–405 (FAQAASRCPD…FRGRKDRTVK (395 aa)) are adenylation 1. The 77-residue stretch at 526 to 602 (DRHLDTLLTV…DVAPLITSRA (77 aa)) folds into the Carrier 1 domain. Ser563 bears the O-(pantetheine 4'-phosphoryl)serine mark. Residues 769–1047 (ETDELTVVLT…GQHFKHALYS (279 aa)) are condensation 1. The segment at 1089–1469 (QVMGQFPSLI…GRIDRLVKLR (381 aa)) is adenylation 2. The Carrier 2 domain maps to 1584-1662 (ITRPKIEDKL…DQINMVRALL (79 aa)). An O-(pantetheine 4'-phosphoryl)serine modification is found at Ser1622. The tract at residues 1652-1976 (KDQINMVRAL…GGLEHPLFEC (325 aa)) is condensation 2.

This sequence belongs to the NRP synthetase family.

It participates in mycotoxin biosynthesis. Functionally, nonribosomal peptide synthetase; part of the gene cluster that mediates the biosynthesis of 11'-deoxyverticillin A, one of the dimeric epipolythiodioxopiperazines (ETPs) from the verticillin family that act as mycotoxins. 11'-deoxyverticillin A is required for normal conidiation. The nonribosomal peptide synthetase verP is speculated to be responsible for condensation of amino acids to form the carbon skeleton of verticillin, whereas the cluster-specific tailoring enzymes are involved in further modifications leading to the production of 11'-deoxyverticillin A. This chain is Nonribosomal peptide synthetase verP, found in Clonostachys rogersoniana.